The sequence spans 1014 residues: Isoleucine--tRNA ligase (1014 aa).

A 'HIGH' region motif is present at residues proline 48–histidine 58. A 'KMSKS' region motif is present at residues lysine 628–serine 632. Lysine 631 serves as a coordination point for ATP.

It belongs to the class-I aminoacyl-tRNA synthetase family. IleS type 2 subfamily. As to quaternary structure, monomer. Zn(2+) is required as a cofactor.

The protein localises to the cytoplasm. The enzyme catalyses tRNA(Ile) + L-isoleucine + ATP = L-isoleucyl-tRNA(Ile) + AMP + diphosphate. Its function is as follows. Catalyzes the attachment of isoleucine to tRNA(Ile). As IleRS can inadvertently accommodate and process structurally similar amino acids such as valine, to avoid such errors it has two additional distinct tRNA(Ile)-dependent editing activities. One activity is designated as 'pretransfer' editing and involves the hydrolysis of activated Val-AMP. The other activity is designated 'posttransfer' editing and involves deacylation of mischarged Val-tRNA(Ile). The polypeptide is Isoleucine--tRNA ligase (Dehalococcoides mccartyi (strain CBDB1)).